A 317-amino-acid polypeptide reads, in one-letter code: Acetyl-coenzyme A carboxylase carboxyl transferase subunit alpha (317 aa).

Residues leucine 40 to glutamate 293 form the CoA carboxyltransferase C-terminal domain.

This sequence belongs to the AccA family. As to quaternary structure, acetyl-CoA carboxylase is a heterohexamer composed of biotin carboxyl carrier protein (AccB), biotin carboxylase (AccC) and two subunits each of ACCase subunit alpha (AccA) and ACCase subunit beta (AccD).

The protein resides in the cytoplasm. It catalyses the reaction N(6)-carboxybiotinyl-L-lysyl-[protein] + acetyl-CoA = N(6)-biotinyl-L-lysyl-[protein] + malonyl-CoA. Its pathway is lipid metabolism; malonyl-CoA biosynthesis; malonyl-CoA from acetyl-CoA: step 1/1. Component of the acetyl coenzyme A carboxylase (ACC) complex. First, biotin carboxylase catalyzes the carboxylation of biotin on its carrier protein (BCCP) and then the CO(2) group is transferred by the carboxyltransferase to acetyl-CoA to form malonyl-CoA. The protein is Acetyl-coenzyme A carboxylase carboxyl transferase subunit alpha of Rhizobium meliloti (strain 1021) (Ensifer meliloti).